The following is a 166-amino-acid chain: Packaging efficiency factor P6 (166 aa).

Residues 134-166 (ILPESAGDQQEAEPVPSVGDQQETAPRKRFRAI) are disordered.

In terms of assembly, heterodimer of P6 and P9; further multimerizes as hexamers of heterodimers. Part of the dodecameric portal complex that is composed of the packaging efficiency factor P6, the DNA packaging ATPase P9, and the internal heterododecamer P20/P22 which spans the virion inner membrane.

The protein localises to the virion. Together with the packaging ATPase P9, forms the external part of the portal vertex that is embeded in the capsid and which plays critical roles in genome packaging and genome ejection. Both proteins multimerize as a single ring-shaped heterdodecamer arranged around a central channel. In Acinetobacter calcoaceticus (Arthrobacter siderocapsulatus), this protein is Packaging efficiency factor P6 (VI).